An 86-amino-acid chain; its full sequence is U15-lycotoxin-Ls1d (86 aa).

The signal sequence occupies residues 1-20 (MNSKIFAVLLLLALLSCVLS). One can recognise a WAP domain in the interval 21–66 (DQYCPKSSITACKKMNIRNDCCKDDDCTGGSWCCATPCGNFCKYPT). 5 cysteine pairs are disulfide-bonded: cysteine 24-cysteine 54, cysteine 32-cysteine 58, cysteine 41-cysteine 53, cysteine 42-cysteine 80, and cysteine 47-cysteine 62.

It belongs to the venom protein 11 family. 01 (wap-1) subfamily. Post-translationally, contains 5 disulfide bonds. As to expression, expressed by the venom gland.

It localises to the secreted. Has antibacterial activity. This Lycosa singoriensis (Wolf spider) protein is U15-lycotoxin-Ls1d.